The following is a 441-amino-acid chain: Probable D-serine dehydratase (441 aa).

Lys-117 bears the N6-(pyridoxal phosphate)lysine mark.

The protein belongs to the serine/threonine dehydratase family. DsdA subfamily. Requires pyridoxal 5'-phosphate as cofactor.

It catalyses the reaction D-serine = pyruvate + NH4(+). This chain is Probable D-serine dehydratase, found in Acinetobacter baylyi (strain ATCC 33305 / BD413 / ADP1).